Reading from the N-terminus, the 542-residue chain is MTFSEILDRVGSMGRFQFLHVAILGLPILNMANHNLLQIFTAATPVHHCRPPPNASTGPWVLPMGPNGKPERCLRFVHPPNASLPNETQRATEPCLDGWVYNSTKDSIVTEWDLVCNSNKLKEMAQSIFMAGILIGGLVLGDLSDRFGRRPILTCSYLLLAASGSGAAFSPTFPIYMVFRFLCGFGISGITLSTVILNVEWVPTRMRAIMSTALGYCYTFGQFILPGLAYAIPQWRWLQLTVSIPFFIFFLSSWWTPESIRWLVLSGKSSKALKILRRVAAFNGKKEEGERLSLEELKLNLQKEIALAKAKYTASDLFRIPMLRRMTFCLSLAWFATGFAYYSLAMGVEEFGVNLYILQIIFGGVDVPAKFITILSLSYLGRHTTQAAALLLAGGAILALTFVPLDLQTVRTVLAVFGKGCLPSSFSCLFLYTSELYPTVIRQTGMGVSNLWTRVGSMLSPLVKITGEVQPFIPNIIYGITALLGGSAAFFLPETLNQPLPETIEDLENWSLRAKKPKQEPEVEKASQRIPLQPHGPGLGSS.

Residues 1–20 (MTFSEILDRVGSMGRFQFLH) lie on the Cytoplasmic side of the membrane. Ser-4 carries the phosphoserine modification. Residues 21–41 (VAILGLPILNMANHNLLQIFT) traverse the membrane as a helical segment. Over 42–123 (AATPVHHCRP…LVCNSNKLKE (82 aa)) the chain is Extracellular. An N-linked (GlcNAc...) asparagine glycan is attached at Asn-86. The helical transmembrane segment at 124-144 (MAQSIFMAGILIGGLVLGDLS) threads the bilayer. The Cytoplasmic segment spans residues 145–154 (DRFGRRPILT). The helical transmembrane segment at 155–175 (CSYLLLAASGSGAAFSPTFPI) threads the bilayer. Tyr-176 is a topological domain (extracellular). The chain crosses the membrane as a helical span at residues 177 to 197 (MVFRFLCGFGISGITLSTVIL). Residues 198–212 (NVEWVPTRMRAIMST) are Cytoplasmic-facing. Residues 213–233 (ALGYCYTFGQFILPGLAYAIP) form a helical membrane-spanning segment. Residues 234 to 236 (QWR) lie on the Extracellular side of the membrane. Residues 237–257 (WLQLTVSIPFFIFFLSSWWTP) form a helical membrane-spanning segment. The Cytoplasmic portion of the chain corresponds to 258 to 327 (ESIRWLVLSG…FRIPMLRRMT (70 aa)). Residues 328-348 (FCLSLAWFATGFAYYSLAMGV) traverse the membrane as a helical segment. Topologically, residues 349–354 (EEFGVN) are extracellular. Residues 355 to 375 (LYILQIIFGGVDVPAKFITIL) traverse the membrane as a helical segment. Over 376-386 (SLSYLGRHTTQ) the chain is Cytoplasmic. Residues 387–407 (AAALLLAGGAILALTFVPLDL) traverse the membrane as a helical segment. The Extracellular portion of the chain corresponds to 408–471 (QTVRTVLAVF…LVKITGEVQP (64 aa)). Residues 472–492 (FIPNIIYGITALLGGSAAFFL) form a helical membrane-spanning segment. Residues 493-542 (PETLNQPLPETIEDLENWSLRAKKPKQEPEVEKASQRIPLQPHGPGLGSS) are Cytoplasmic-facing. Residues 515-542 (KKPKQEPEVEKASQRIPLQPHGPGLGSS) form a disordered region. The span at 517-527 (PKQEPEVEKAS) shows a compositional bias: basic and acidic residues.

Belongs to the major facilitator (TC 2.A.1) superfamily. Organic cation transporter (TC 2.A.1.19) family.

Its subcellular location is the basolateral cell membrane. It catalyses the reaction estrone 3-sulfate(out) + glutarate(in) = estrone 3-sulfate(in) + glutarate(out). The catalysed reaction is estrone 3-sulfate(in) + 2-oxoglutarate(out) = estrone 3-sulfate(out) + 2-oxoglutarate(in). The enzyme catalyses glutarate(in) + 2-oxoglutarate(out) = glutarate(out) + 2-oxoglutarate(in). It carries out the reaction urate(in) + 2-oxoglutarate(out) = urate(out) + 2-oxoglutarate(in). It catalyses the reaction taurocholate(out) + glutarate(in) = taurocholate(in) + glutarate(out). The catalysed reaction is dehydroepiandrosterone 3-sulfate(out) + glutarate(in) = dehydroepiandrosterone 3-sulfate(in) + glutarate(out). The enzyme catalyses prostaglandin F2alpha(out) + glutarate(in) = prostaglandin F2alpha(in) + glutarate(out). It carries out the reaction prostaglandin F2alpha(out) + 2-oxoglutarate(in) = prostaglandin F2alpha(in) + 2-oxoglutarate(out). It catalyses the reaction (R)-carnitine(out) + 2-oxoglutarate(in) = (R)-carnitine(in) + 2-oxoglutarate(out). The catalysed reaction is glutarate(in) + (R)-carnitine(out) = glutarate(out) + (R)-carnitine(in). The enzyme catalyses prostaglandin E2(out) + 2-oxoglutarate(in) = prostaglandin E2(in) + 2-oxoglutarate(out). It carries out the reaction prostaglandin E2(out) + glutarate(in) = prostaglandin E2(in) + glutarate(out). It catalyses the reaction urate(in) + glutarate(out) = urate(out) + glutarate(in). The catalysed reaction is taurocholate(out) + 2-oxoglutarate(in) = taurocholate(in) + 2-oxoglutarate(out). The enzyme catalyses dehydroepiandrosterone 3-sulfate(out) + 2-oxoglutarate(in) = dehydroepiandrosterone 3-sulfate(in) + 2-oxoglutarate(out). It carries out the reaction kynurenate(out) + a dicarboxylate(in) = kynurenate(in) + a dicarboxylate(out). It catalyses the reaction (indol-3-yl)acetate(out) + a dicarboxylate(in) = (indol-3-yl)acetate(in) + a dicarboxylate(out). The catalysed reaction is indoxyl sulfate(out) + a dicarboxylate(in) = indoxyl sulfate(in) + a dicarboxylate(out). The enzyme catalyses N-benzoylglycine(out) + a dicarboxylate(in) = N-benzoylglycine(in) + a dicarboxylate(out). It carries out the reaction 3-carboxy-4-methyl-5-propyl-2-furanpropanoate(out) + a dicarboxylate(in) = 3-carboxy-4-methyl-5-propyl-2-furanpropanoate(in) + a dicarboxylate(out). It catalyses the reaction (6R)-L-erythro-5,6,7,8-tetrahydrobiopterin(out) + a dicarboxylate(in) = (6R)-L-erythro-5,6,7,8-tetrahydrobiopterin(in) + a dicarboxylate(out). The catalysed reaction is L-erythro-7,8-dihydrobiopterin(out) + a dicarboxylate(in) = L-erythro-7,8-dihydrobiopterin(in) + a dicarboxylate(out). The enzyme catalyses L-sepiapterin(out) + a dicarboxylate(in) = L-sepiapterin(in) + a dicarboxylate(out). In terms of biological role, functions as an organic anion/dicarboxylate exchanger that couples organic anion uptake indirectly to the sodium gradient. Transports organic anions such as estrone 3-sulfate (E1S) and urate in exchange for dicarboxylates such as glutarate or ketoglutarate (2-oxoglutarate). Plays an important role in the excretion of endogenous and exogenous organic anions, especially from the kidney and the brain. E1S transport is pH- and chloride-dependent and may also involve E1S/cGMP exchange. Responsible for the transport of prostaglandin E2 (PGE2) and prostaglandin F2(alpha) (PGF2(alpha)) in the basolateral side of the renal tubule. Involved in the transport of neuroactive tryptophan metabolites kynurenate and xanthurenate. Functions as a biopterin transporters involved in the uptake and the secretion of coenzymes tetrahydrobiopterin (BH4), dihydrobiopterin (BH2) and sepiapterin to urine, thereby determining baseline levels of blood biopterins. May be involved in the basolateral transport of steviol, a metabolite of the popular sugar substitute stevioside. May participate in the detoxification/ renal excretion of drugs and xenobiotics, such as the histamine H(2)-receptor antagonists fexofenadine and cimetidine, the antibiotic benzylpenicillin (PCG), the anionic herbicide 2,4-dichloro-phenoxyacetate (2,4-D), the diagnostic agent p-aminohippurate (PAH), the antiviral acyclovir (ACV), and the mycotoxin ochratoxin (OTA), by transporting these exogenous organic anions across the cell membrane in exchange for dicarboxylates such as 2-oxoglutarate. Contributes to the renal uptake of potent uremic toxins (indoxyl sulfate (IS), indole acetate (IA), hippurate/N-benzoylglycine (HA) and 3-carboxy-4-methyl-5-propyl-2-furanpropionate (CMPF)), pravastatin, PCG, E1S and dehydroepiandrosterone sulfate (DHEAS), and is partly involved in the renal uptake of temocaprilat (an angiotensin-converting enzyme (ACE) inhibitor). May contribute to the release of cortisol in the adrenals. Involved in one of the detoxification systems on the choroid plexus (CP), removes substrates such as E1S or taurocholate (TC), PCG, 2,4-D and PAH, from the cerebrospinal fluid (CSF) to the blood for eventual excretion in urine and bile. Also contributes to the uptake of several other organic compounds such as the prostanoids prostaglandin E(2) and prostaglandin F(2-alpha), L-carnitine, and the therapeutic drugs allopurinol, 6-mercaptopurine (6-MP) and 5-fluorouracil (5-FU). Mediates the transport of PAH, PCG, and the statins pravastatin and pitavastatin, from the cerebrum into the blood circulation across the blood-brain barrier (BBB). In summary, plays a role in the efflux of drugs and xenobiotics, helping reduce their undesired toxicological effects on the body. This is Organic anion transporter 3 (SLC22A8) from Pongo abelii (Sumatran orangutan).